The primary structure comprises 137 residues: Putative pre-16S rRNA nuclease (137 aa).

This sequence belongs to the YqgF nuclease family.

The protein resides in the cytoplasm. Functionally, could be a nuclease involved in processing of the 5'-end of pre-16S rRNA. In Clostridium kluyveri (strain NBRC 12016), this protein is Putative pre-16S rRNA nuclease.